We begin with the raw amino-acid sequence, 147 residues long: Globin, major monomeric component (147 aa).

Positions 1 to 146 (GLSAAQRQVI…ISGALISGLQ (146 aa)) constitute a Globin domain. Heme b is bound at residue H90.

Belongs to the globin family. In terms of assembly, monomer.

The sequence is that of Globin, major monomeric component from Glycera dibranchiata (Bloodworm).